The sequence spans 105 residues: Vacuolar ATPase assembly integral membrane protein VMA21 homolog (105 aa).

The segment at 1 to 26 is disordered; sequence MSTKNKKAAGGNGGAPKQTRQQSHDS. Over 1–36 the chain is Cytoplasmic; that stretch reads MSTKNKKAAGGNGGAPKQTRQQSHDSQDYSSFKTVL. The chain crosses the membrane as a helical span at residues 37 to 57; it reads FYCMLIVFLPVLTFFVLKGFV. The Lumenal portion of the chain corresponds to 58-68; that stretch reads LDQFLDISEVK. The chain crosses the membrane as a helical span at residues 69-89; that stretch reads VNIASAVGAVVALHVALGLYI. Topologically, residues 90 to 105 are cytoplasmic; it reads YRAYFGAPGSKASKTD.

Belongs to the VMA21 family.

The protein resides in the endoplasmic reticulum membrane. It is found in the endoplasmic reticulum-Golgi intermediate compartment membrane. Its subcellular location is the cytoplasmic vesicle. It localises to the COPII-coated vesicle membrane. Its function is as follows. Required for the assembly of the V0 complex of the vacuolar ATPase (V-ATPase) in the endoplasmic reticulum. In Drosophila yakuba (Fruit fly), this protein is Vacuolar ATPase assembly integral membrane protein VMA21 homolog.